Reading from the N-terminus, the 348-residue chain is Dihydroorotase (348 aa).

Positions 17 and 19 each coordinate Zn(2+). Substrate is bound by residues 19 to 21 and Asn45; that span reads HLR. Zn(2+) contacts are provided by Lys103, His140, and His178. An N6-carboxylysine modification is found at Lys103. His140 provides a ligand contact to substrate. Leu223 is a binding site for substrate. Asp251 is a binding site for Zn(2+). Residue Asp251 is part of the active site. Residues His255 and Ala267 each contribute to the substrate site.

Belongs to the metallo-dependent hydrolases superfamily. DHOase family. Class II DHOase subfamily. In terms of assembly, homodimer. Zn(2+) serves as cofactor.

It catalyses the reaction (S)-dihydroorotate + H2O = N-carbamoyl-L-aspartate + H(+). It functions in the pathway pyrimidine metabolism; UMP biosynthesis via de novo pathway; (S)-dihydroorotate from bicarbonate: step 3/3. In terms of biological role, catalyzes the reversible cyclization of carbamoyl aspartate to dihydroorotate. The chain is Dihydroorotase from Salmonella arizonae (strain ATCC BAA-731 / CDC346-86 / RSK2980).